We begin with the raw amino-acid sequence, 290 residues long: MDPEVSLLLQCPPGGLPEKQVRAELSPAYDRRPLPGGDKAIIAIWESRLQAQPWLFNAPKFRLHSATLAPTGLPGPQLLLRLGLTSYQDFLGTNWASSAAWLRQQGATDWGDKQAYLADPLGVGAALATADDFLVFLRRSGQVAEAPGLVDVPGGHPEPQALCPGDSPLHKDLPGELVVHELFSSVLQEICDEVNVPPLTLSQPLLLGIACNETSAGRASAEFYVQCSLTSEQVRRHYMSGGPEAHESTGIIFVEKQSMQRLQETEMWPELCPSAKGAIFLYNRVQGSST.

Phenylalanine 56, tyrosine 87, arginine 139, alanine 144, aspartate 151, histidine 156, and glutamate 158 together coordinate substrate. A Nudix hydrolase domain is found at 118-285; sequence ADPLGVGAAL…KGAIFLYNRV (168 aa). The short motif at 175–196 is the Nudix box element; sequence GELVVHELFSSVLQEICDEVNV. Residues glutamate 189 and glutamate 193 each coordinate Mg(2+). Substrate is bound at residue serine 274.

The protein belongs to the Nudix family. Mg(2+) is required as a cofactor.

The enzyme catalyses UDP-sugar + H2O = UMP + alpha-D-aldose 1-phosphate.. In terms of biological role, hydrolyzes UDP-glucose to glucose 1-phosphate and UMP and UDP-galactose to galactose 1-phosphate and UMP. Preferred substrate is UDP-glucose. In Bos taurus (Bovine), this protein is Uridine diphosphate glucose pyrophosphatase NUDT22 (NUDT22).